The chain runs to 2641 residues: CCR4-NOT transcription complex subunit let-711 (2641 aa).

The short motif at 660 to 664 is the LXXLL element; the sequence is LSELL. Disordered regions lie at residues 771–887, 936–963, 1197–1221, 1518–1565, and 2034–2054; these read SGRS…QNAQ, TQRQNSNSGWHAAPAPQRPSGPPTPQQQ, EGGRHTPVGSAQAGSASSTPTPAAA, QSKI…SQGA, and GMNNAMNNGAGNAAHHHAGLQ. Composition is skewed to low complexity over residues 774-795, 802-839, and 853-877; these read SSSVSSGGHVQQSSGSQPQQQQ, LPPSGVVPVQQQPQQPPSLQQQHSQQSLPTPPTTSQQQ, and PAQFAPQPMFPPQAQAQHQHQHMMG. The span at 951–960 shows a compositional bias: pro residues; that stretch reads PQRPSGPPTP. Positions 1205 to 1221 are enriched in low complexity; it reads GSAQAGSASSTPTPAAA. Positions 2034–2046 are enriched in low complexity; that stretch reads GMNNAMNNGAGNA. The LXXLL signature appears at 2341 to 2345; the sequence is LRVLL. A disordered region spans residues 2609 to 2641; that stretch reads AQGSQPQAQPDGAPGPLGNNTGAANQQQNPNTN.

This sequence belongs to the CNOT1 family. Component of the CCR4-NOT complex at least composed of ccf-1, ccr-4 and let-711, which is required for germ cell development in hermaphrodites. Within the complex interacts with ccf-1 and ccr-4; the interactions are direct. In terms of tissue distribution, highly expressed in the germline of hermaphrodites.

It localises to the nucleus. Scaffolding component of the CCR4-NOT complex which is one of the major cellular mRNA deadenylases and is linked to various cellular processes including bulk mRNA degradation, miRNA-mediated repression, translational repression during translational initiation and general transcription regulation. Positively regulates the accumulation of the CCR4-NOT complex component ccr-1. Within the complex promotes germ cell development and fertility in hermaphrodites. Additional complex functions may be a consequence of its influence on mRNA expression. Its scaffolding function implies its interaction with the catalytic complex module and diverse RNA-binding proteins mediating the complex recruitment to selected mRNA 3'UTRs. Mediates the recruitment of the CCR4-NOT complex to miRNA targets and to the RISC complex. Acts as a transcriptional repressor. Represses the ligand-dependent transcriptional activation by nuclear receptors. In embryos, plays a role in female pronucleus and mitotic spindle positioning during the first cleavage divisions after fertilization. This may partly be through negatively regulating the accumulation of zyg-9 at the centrosome. Negatively regulates the formation of long astral microtubules in developing embryos. Required for the stabilization and degradation of maternal mRNAs such as nos-2 in somatic blastomeres. This is CCR4-NOT transcription complex subunit let-711 from Caenorhabditis elegans.